We begin with the raw amino-acid sequence, 126 residues long: UPF0235 protein C15orf40 homolog (126 aa).

A disordered region spans residues 1 to 32 (MPKKAGATSKGKNQTKEPETAPPAAGPVATDP). A Phosphoserine modification is found at serine 89.

This sequence belongs to the UPF0235 family.

The sequence is that of UPF0235 protein C15orf40 homolog from Mus musculus (Mouse).